The sequence spans 256 residues: Protein FixA (256 aa).

It belongs to the ETF beta-subunit/FixA family. In terms of assembly, heterodimer of FixA and FixB.

It functions in the pathway amine and polyamine metabolism; carnitine metabolism. In terms of biological role, required for anaerobic carnitine reduction. May bring reductant to CaiA. This Shigella flexneri serotype 5b (strain 8401) protein is Protein FixA.